A 292-amino-acid polypeptide reads, in one-letter code: Ribosomal protein L11 methyltransferase (292 aa).

4 residues coordinate S-adenosyl-L-methionine: Thr-144, Gly-165, Asp-187, and Asn-229.

This sequence belongs to the methyltransferase superfamily. PrmA family.

It localises to the cytoplasm. The enzyme catalyses L-lysyl-[protein] + 3 S-adenosyl-L-methionine = N(6),N(6),N(6)-trimethyl-L-lysyl-[protein] + 3 S-adenosyl-L-homocysteine + 3 H(+). In terms of biological role, methylates ribosomal protein L11. The polypeptide is Ribosomal protein L11 methyltransferase (Pseudomonas putida (strain W619)).